We begin with the raw amino-acid sequence, 134 residues long: Arsenate reductase (134 aa).

Catalysis depends on nucleophile residues C11, C83, and C90. Disulfide bonds link C11–C83 and C83–C90.

The protein belongs to the low molecular weight phosphotyrosine protein phosphatase family. Thioredoxin-coupled ArsC subfamily.

Its subcellular location is the cytoplasm. It catalyses the reaction arsenate + [thioredoxin]-dithiol + H(+) = arsenite + [thioredoxin]-disulfide + H2O. Catalyzes the reduction of arsenate [As(V)] to arsenite [As(III)]. This chain is Arsenate reductase, found in Brevibacillus brevis (strain 47 / JCM 6285 / NBRC 100599).